A 794-amino-acid polypeptide reads, in one-letter code: DNA ligase (794 aa).

Residues 35–39 (DAEYD), 84–85 (SL), and E126 contribute to the NAD(+) site. Catalysis depends on K128, which acts as the N6-AMP-lysine intermediate. The NAD(+) site is built by R149, E186, K302, and K326. Positions 420, 423, 450, and 456 each coordinate Zn(2+). Positions 711 to 794 (VEGLPLAGQT…KLLDEYGVAH (84 aa)) constitute a BRCT domain.

The protein belongs to the NAD-dependent DNA ligase family. LigA subfamily. Requires Mg(2+) as cofactor. Mn(2+) serves as cofactor.

The enzyme catalyses NAD(+) + (deoxyribonucleotide)n-3'-hydroxyl + 5'-phospho-(deoxyribonucleotide)m = (deoxyribonucleotide)n+m + AMP + beta-nicotinamide D-nucleotide.. Functionally, DNA ligase that catalyzes the formation of phosphodiester linkages between 5'-phosphoryl and 3'-hydroxyl groups in double-stranded DNA using NAD as a coenzyme and as the energy source for the reaction. It is essential for DNA replication and repair of damaged DNA. This is DNA ligase from Pseudomonas paraeruginosa (strain DSM 24068 / PA7) (Pseudomonas aeruginosa (strain PA7)).